Here is a 927-residue protein sequence, read N- to C-terminus: Isoleucine--tRNA ligase (927 aa).

Residues 60-70 (PYANGNIHLGH) carry the 'HIGH' region motif. Residue Glu-557 participates in L-isoleucyl-5'-AMP binding. Residues 598–602 (KMSKS) carry the 'KMSKS' region motif. Residue Lys-601 coordinates ATP. Zn(2+) contacts are provided by Cys-895, Cys-898, Cys-915, and Cys-918.

The protein belongs to the class-I aminoacyl-tRNA synthetase family. IleS type 1 subfamily. Monomer. It depends on Zn(2+) as a cofactor.

It is found in the cytoplasm. The catalysed reaction is tRNA(Ile) + L-isoleucine + ATP = L-isoleucyl-tRNA(Ile) + AMP + diphosphate. Its function is as follows. Catalyzes the attachment of isoleucine to tRNA(Ile). As IleRS can inadvertently accommodate and process structurally similar amino acids such as valine, to avoid such errors it has two additional distinct tRNA(Ile)-dependent editing activities. One activity is designated as 'pretransfer' editing and involves the hydrolysis of activated Val-AMP. The other activity is designated 'posttransfer' editing and involves deacylation of mischarged Val-tRNA(Ile). The chain is Isoleucine--tRNA ligase from Syntrophomonas wolfei subsp. wolfei (strain DSM 2245B / Goettingen).